Consider the following 264-residue polypeptide: COP9 signalosome complex subunit 7b (264 aa).

N-acetylalanine is present on alanine 2. In terms of domain architecture, PCI spans 2–159; it reads AGEQKPSSNL…QLLEVDFCIG (158 aa). Positions 188–237 form a coiled coil; that stretch reads IEQQVLRANQYKENHNRTQQQVEAEVTNIKKTLKATASSSAQEMEQQLAE. The span at 223-232 shows a compositional bias: polar residues; sequence TASSSAQEME. Residues 223-264 are disordered; sequence TASSSAQEMEQQLAERECPPHAEQRQPTKKMSKVKGLVSSRH. The segment covering 235–248 has biased composition (basic and acidic residues); sequence LAERECPPHAEQRQ. Phosphothreonine is present on serine 261. A Phosphoserine modification is found at arginine 263.

It belongs to the CSN7/EIF3M family. CSN7 subfamily. As to quaternary structure, component of the CSN complex, composed of COPS1/GPS1, COPS2, COPS3, COPS4, COPS5, COPS6, COPS7 (COPS7A or COPS7B), COPS8 and COPS9 isoform 1. In the complex, it probably interacts directly with COPS1, COPS2, COPS4, COPS5, COPS6 and COPS8. Interacts with EIF3S6. (Microbial infection) Interacts with vaccinia virus protein C9L.

It localises to the cytoplasm. It is found in the nucleus. Component of the COP9 signalosome complex (CSN), a complex involved in various cellular and developmental processes. The CSN complex is an essential regulator of the ubiquitin (Ubl) conjugation pathway by mediating the deneddylation of the cullin subunits of SCF-type E3 ligase complexes, leading to decrease the Ubl ligase activity of SCF-type complexes such as SCF, CSA or DDB2. The complex is also involved in phosphorylation of p53/TP53, JUN, I-kappa-B-alpha/NFKBIA, ITPK1 and IRF8/ICSBP, possibly via its association with CK2 and PKD kinases. CSN-dependent phosphorylation of TP53 and JUN promotes and protects degradation by the Ubl system, respectively. The polypeptide is COP9 signalosome complex subunit 7b (COPS7B) (Homo sapiens (Human)).